Here is an 801-residue protein sequence, read N- to C-terminus: Mitochondrial intermediate peptidase (801 aa).

Residues 1–41 constitute a mitochondrion transit peptide; that stretch reads MKDQLLVPLRRRPWTCQKCLQRLQLPRHQTRRSFETAASPF. Zn(2+) is bound at residue His564. Residue Glu565 is part of the active site. Residues His568 and His571 each contribute to the Zn(2+) site.

This sequence belongs to the peptidase M3 family. Requires Zn(2+) as cofactor.

Its subcellular location is the mitochondrion matrix. It catalyses the reaction Release of an N-terminal octapeptide as second stage of processing of some proteins imported into the mitochondrion.. Its function is as follows. Cleaves proteins, imported into the mitochondrion, to their mature size. While most mitochondrial precursor proteins are processed to the mature form in one step by mitochondrial processing peptidase (MPP), the sequential cleavage by MIP of an octapeptide after initial processing by MPP is a required step for a subgroup of nuclear-encoded precursor proteins destined for the matrix or the inner membrane. The sequence is that of Mitochondrial intermediate peptidase (oct1) from Aspergillus fumigatus (strain ATCC MYA-4609 / CBS 101355 / FGSC A1100 / Af293) (Neosartorya fumigata).